A 365-amino-acid polypeptide reads, in one-letter code: Protein BZR1 homolog 2 (365 aa).

Gly residues predominate over residues 1–30; that stretch reads MATGGGGGGGGMGGGGVGGGAGAAGVGVGG. Disordered stretches follow at residues 1 to 45, 113 to 154, 191 to 236, and 344 to 365; these read MATG…KRRE, SPSP…NMAN, SAPV…TPPS, and HEDSGSDDLELTLGSSRTRAAA. Residues 31-113 are required for DNA-binding; sequence RMPTWREREN…RMEVIGCSVS (83 aa). Residues 113–144 are compositionally biased toward low complexity; that stretch reads SPSPCSSYQPSPRASYNASPTSSSFPSGASSP. Polar residues-rich tracts occupy residues 215-233 and 356-365; these read SNVQPTWTGSNSPCVVNST and LGSSRTRAAA.

This sequence belongs to the BZR/LAT61 family. In terms of assembly, interacts with PUB24.

Its function is as follows. May function in brassinosteroid signaling. This Oryza sativa subsp. japonica (Rice) protein is Protein BZR1 homolog 2.